Consider the following 568-residue polypeptide: Zinc finger protein 768 (568 aa).

Positions Met1 to His16 are enriched in basic and acidic residues. 3 disordered regions span residues Met1–Val223, Ser228–Pro247, and Leu264–Arg287. Residues Ser17, Ser23, and Ser27 each carry the phosphoserine modification. Residue Thr35 is modified to Phosphothreonine. Residues Ser36, Ser65, Ser72, Ser79, Ser86, Ser93, Ser100, Ser107, Ser114, Ser121, Ser128, Ser135, and Ser149 each carry the phosphoserine modification. Over residues Glu62–Pro80 the composition is skewed to low complexity. Residues Ser110 to Pro122 show a composition bias toward polar residues. Tyr152 carries the post-translational modification Phosphotyrosine. Ser154 bears the Phosphoserine mark. A compositionally biased stretch (polar residues) spans Phe159–Glu186. Phosphothreonine is present on Thr189. At Ser191 the chain carries Phosphoserine. The C2H2-type 1 zinc-finger motif lies at Asn289–His311. At Thr312 the chain carries Phosphothreonine. Tyr317 is modified (phosphotyrosine). C2H2-type zinc fingers lie at residues Tyr317 to His339, Tyr345 to His367, Tyr373 to His395, and Tyr401 to His423. Phosphoserine occurs at positions 323 and 327. At Thr424 the chain carries Phosphothreonine. 5 C2H2-type zinc fingers span residues Phe429 to His451, Phe457 to His479, Tyr485 to His507, Tyr513 to His535, and Tyr541 to His563. Ser470 carries the post-translational modification Phosphoserine.

The protein belongs to the krueppel C2H2-type zinc-finger protein family. In terms of assembly, interacts (via zinc-finger domains) with TP53 (via N-terminus); interaction might be facilitated by TP53 oligomerization state. Interacts with ELP3. Post-translationally, may be phosphorylated at residue 'Ser-5' of the tandem heptapeptide repeats in the N-terminus. Phosphorylation might be increased upon RAS pathway activation and negatively regulate protein stability.

The protein resides in the nucleus. It localises to the chromosome. Functionally, binds to mammalian-wide interspersed repeat (MIRs) sequences in euchromatin and promoter regions of genes at the consensus sequence 5'-GCTGTGTG-[N20]-CCTCTCTG-3', consisting of two anchor regions connected by a linker region; the linker region probably does not contribute to the binding specificity. Required for cell homeostasis. May be involved in transcriptional regulation. The protein is Zinc finger protein 768 (Znf768) of Mus musculus (Mouse).